The chain runs to 762 residues: Molybdenum cofactor sulfurase 2 (762 aa).

Lys-234 is subject to N6-(pyridoxal phosphate)lysine. Residue Cys-400 is part of the active site. One can recognise an MOSC domain in the interval 590–738; that stretch reads AWISKALRMP…LECGSILEPV (149 aa).

The protein belongs to the class-V pyridoxal-phosphate-dependent aminotransferase family. MOCOS subfamily. The cofactor is pyridoxal 5'-phosphate.

The enzyme catalyses Mo-molybdopterin + L-cysteine + AH2 = thio-Mo-molybdopterin + L-alanine + A + H2O. In terms of biological role, sulfurates the molybdenum cofactor. Sulfation of molybdenum is essential for xanthine dehydrogenase (XDH) and aldehyde oxidase (ADO) enzymes in which molybdenum cofactor is liganded by 1 oxygen and 1 sulfur atom in active form. The chain is Molybdenum cofactor sulfurase 2 from Aedes aegypti (Yellowfever mosquito).